The following is a 528-amino-acid chain: GMP synthase [glutamine-hydrolyzing] (528 aa).

Residues 13–204 enclose the Glutamine amidotransferase type-1 domain; that stretch reads AIVILDFGSQ…VYDICSCEPD (192 aa). Residue Cys90 is the Nucleophile of the active site. Catalysis depends on residues His178 and Glu180. A GMPS ATP-PPase domain is found at 205-403; it reads WTTNLFIDEA…LGLPDEIVRR (199 aa). 232–238 serves as a coordination point for ATP; it reads SGGVDSS.

Homodimer.

The catalysed reaction is XMP + L-glutamine + ATP + H2O = GMP + L-glutamate + AMP + diphosphate + 2 H(+). It functions in the pathway purine metabolism; GMP biosynthesis; GMP from XMP (L-Gln route): step 1/1. In terms of biological role, catalyzes the synthesis of GMP from XMP. The chain is GMP synthase [glutamine-hydrolyzing] from Prochlorococcus marinus (strain NATL2A).